The following is a 464-amino-acid chain: Fumarate hydratase class II (464 aa).

Substrate is bound by residues 98–100 (SGT), R126, 129–132 (HPND), 139–141 (SSN), and T187. H188 (proton donor/acceptor) is an active-site residue. S318 is an active-site residue. Residues S319 and 324–326 (KVN) contribute to the substrate site.

The protein belongs to the class-II fumarase/aspartase family. Fumarase subfamily. Homotetramer.

The protein resides in the cytoplasm. The catalysed reaction is (S)-malate = fumarate + H2O. The protein operates within carbohydrate metabolism; tricarboxylic acid cycle; (S)-malate from fumarate: step 1/1. Functionally, involved in the TCA cycle. Catalyzes the stereospecific interconversion of fumarate to L-malate. This chain is Fumarate hydratase class II, found in Photorhabdus laumondii subsp. laumondii (strain DSM 15139 / CIP 105565 / TT01) (Photorhabdus luminescens subsp. laumondii).